The sequence spans 528 residues: Ceramide glucosyltransferase (528 aa).

Residues 1–6 are Lumenal-facing; it reads MYSFIE. The helical transmembrane segment at 7–27 threads the bilayer; it reads CIAGALFVLGCVVVTLVVIGV. Residues 28–369 are Cytoplasmic-facing; sequence RALLYNFRNR…TVLSATILEP (342 aa). Aspartate 94 is a short sequence motif (D1). Residue aspartate 154 is a short sequence motif, D2. Position 308 (aspartate 308) is a short sequence motif, D3. The active-site Proton acceptor is the aspartate 308. The (Q/R)XXRW motif lies at 349-353; sequence RRSRW. Residues 370 to 390 form a helical membrane-spanning segment; sequence FTECFLFATYMSLAMTTIPVL. Residues 391-402 lie on the Lumenal side of the membrane; that stretch reads SQNLGIPKTWNA. A helical transmembrane segment spans residues 403–423; the sequence is TAIAWFTITTLWMLIDYIGYL. Residues 424 to 457 lie on the Cytoplasmic side of the membrane; the sequence is RLHSGVTMEVDEHTPYFAKGFKNTGGIKRRPFLE. The chain crosses the membrane as a helical span at residues 458–478; sequence FLAAWIGREGLAFPVWAYAVV. The Lumenal segment spans residues 479–528; the sequence is FGNTVNWRGRLFYIHWDTTVDAVEPREERTREVRTPELERGPSRNKHRVD. The disordered stretch occupies residues 503–528; sequence PREERTREVRTPELERGPSRNKHRVD.

Belongs to the glycosyltransferase 2 family.

The protein localises to the golgi apparatus membrane. It catalyses the reaction an N-acylsphing-4-enine + UDP-alpha-D-glucose = a beta-D-glucosyl-(1&lt;-&gt;1')-N-acylsphing-4-enine + UDP + H(+). It functions in the pathway lipid metabolism; sphingolipid metabolism. Catalyzes the final step in the biosynthesis of the membrane lipid glucosylceramide (GluCer), the transfer of glucose to ceramide. Glucosylceramides play important roles in growth, differentiation and pathogenicity. Contribution to fungal pathogenesis is host-dependent. This is Ceramide glucosyltransferase from Gibberella zeae (strain ATCC MYA-4620 / CBS 123657 / FGSC 9075 / NRRL 31084 / PH-1) (Wheat head blight fungus).